Here is an 85-residue protein sequence, read N- to C-terminus: RNA-binding protein Hfq (85 aa).

Residues 11–71 enclose the Sm domain; the sequence is DTFLNHVRKS…ISTIMPGHPV (61 aa).

Belongs to the Hfq family. As to quaternary structure, homohexamer.

Functionally, RNA chaperone that binds small regulatory RNA (sRNAs) and mRNAs to facilitate mRNA translational regulation in response to envelope stress, environmental stress and changes in metabolite concentrations. Also binds with high specificity to tRNAs. Seems to be involved in the regulation of NifA. The polypeptide is RNA-binding protein Hfq (Azorhizobium caulinodans (strain ATCC 43989 / DSM 5975 / JCM 20966 / LMG 6465 / NBRC 14845 / NCIMB 13405 / ORS 571)).